A 485-amino-acid polypeptide reads, in one-letter code: Glutamate--tRNA ligase 1 (485 aa).

A 'HIGH' region motif is present at residues 10–20; it reads PSPTGAIHIGN. The 'KMSKS' region signature appears at 252–256; the sequence is KLSKR. Residue K255 participates in ATP binding.

Belongs to the class-I aminoacyl-tRNA synthetase family. Glutamate--tRNA ligase type 1 subfamily. Monomer.

The protein resides in the cytoplasm. It catalyses the reaction tRNA(Glu) + L-glutamate + ATP = L-glutamyl-tRNA(Glu) + AMP + diphosphate. In terms of biological role, catalyzes the attachment of glutamate to tRNA(Glu) in a two-step reaction: glutamate is first activated by ATP to form Glu-AMP and then transferred to the acceptor end of tRNA(Glu). The polypeptide is Glutamate--tRNA ligase 1 (Thermoanaerobacter pseudethanolicus (strain ATCC 33223 / 39E) (Clostridium thermohydrosulfuricum)).